The sequence spans 141 residues: Large ribosomal subunit protein uL11 (141 aa).

The protein belongs to the universal ribosomal protein uL11 family. As to quaternary structure, part of the ribosomal stalk of the 50S ribosomal subunit. Interacts with L10 and the large rRNA to form the base of the stalk. L10 forms an elongated spine to which L12 dimers bind in a sequential fashion forming a multimeric L10(L12)X complex. Post-translationally, one or more lysine residues are methylated.

Forms part of the ribosomal stalk which helps the ribosome interact with GTP-bound translation factors. The chain is Large ribosomal subunit protein uL11 from Chlamydia caviae (strain ATCC VR-813 / DSM 19441 / 03DC25 / GPIC) (Chlamydophila caviae).